A 414-amino-acid chain; its full sequence is Serine/threonine transporter SstT (414 aa).

A run of 8 helical transmembrane segments spans residues 16 to 36 (GSLVKQILVGLVLGILLAWIS), 46 to 66 (LGTLFVGALKAVAPVLVLMLV), 84 to 104 (ILFLYLLGTFSAALAAVVFSF), 143 to 163 (ALLNANYIGILVWAVGLGFAL), 180 to 200 (AVTFMVKLVIRFAPVGIFGLV), 219 to 239 (LVVLIGCMLLVALMVNPLLVF), 300 to 320 (MAGAAITITVLTLAAVHTLGV), and 332 to 352 (VVASLCACGASGVAGGSLLLI).

The protein belongs to the dicarboxylate/amino acid:cation symporter (DAACS) (TC 2.A.23) family.

It is found in the cell inner membrane. It carries out the reaction L-serine(in) + Na(+)(in) = L-serine(out) + Na(+)(out). The catalysed reaction is L-threonine(in) + Na(+)(in) = L-threonine(out) + Na(+)(out). Its function is as follows. Involved in the import of serine and threonine into the cell, with the concomitant import of sodium (symport system). This is Serine/threonine transporter SstT from Salmonella heidelberg (strain SL476).